A 634-amino-acid polypeptide reads, in one-letter code: uncharacterized protein (634 aa).

The N-terminal stretch at 1-40 (MWLQQRLKGLPGLLSSSWARRLLCLLGLLVLLLWFASSGA) is a signal peptide. Topologically, residues 41–589 (RRAAGGLHLP…DEHMAQQDPG (549 aa)) are extracellular. Asn363 carries an N-linked (GlcNAc...) asparagine glycan. The chain crosses the membrane as a helical span at residues 590–610 (LPFLFWFSVASLITLFHLFLF). At 611 to 634 (KLIYNEYCGPGAKPLFRSKEDPSV) the chain is on the cytoplasmic side.

It localises to the membrane. This is an uncharacterized protein from Mus musculus (Mouse).